A 357-amino-acid chain; its full sequence is Tribbles homolog 3 (357 aa).

Residues 1 to 63 (MRASPLAVPA…PAPVHAPDVT (63 aa)) are disordered. The segment at 1–127 (MRASPLAVPA…GHVARPAEVL (127 aa)) is interaction with DDIT3/CHOP. Residues 68–316 (LGPYVLLEPE…SGILLHPWLR (249 aa)) enclose the Protein kinase domain. Positions 333 to 357 (DQVVPEGPGLEEAEEEGERDMGLYG) are disordered. A compositionally biased stretch (acidic residues) spans 341–350 (GLEEAEEEGE).

Belongs to the protein kinase superfamily. CAMK Ser/Thr protein kinase family. Tribbles subfamily. In terms of assembly, interacts with AKT1, AKT2, MAP2K1 and MAP2K7. Interacts with ATF4. Interacts with DDIT3/CHOP and inhibits its interaction with EP300/P300. Interacts with APOBEC3C. Interacts (via N-terminus) with APOBEC3A. Interacts with RELA.

Its subcellular location is the nucleus. Inactive protein kinase which acts as a regulator of the integrated stress response (ISR), a process for adaptation to various stress. Inhibits the transcriptional activity of DDIT3/CHOP and is involved in DDIT3/CHOP-dependent cell death during ER stress. May play a role in programmed neuronal cell death but does not appear to affect non-neuronal cells. Acts as a negative feedback regulator of the ATF4-dependent transcription during the ISR: while TRIB3 expression is promoted by ATF4, TRIB3 protein interacts with ATF4 and inhibits ATF4 transcription activity. Disrupts insulin signaling by binding directly to Akt kinases and blocking their activation. May bind directly to and mask the 'Thr-308' phosphorylation site in AKT1. Interacts with the NF-kappa-B transactivator p65 RELA and inhibits its phosphorylation and thus its transcriptional activation activity. Interacts with MAPK kinases and regulates activation of MAP kinases. Can inhibit APOBEC3A editing of nuclear DNA. This chain is Tribbles homolog 3 (TRIB3), found in Bos taurus (Bovine).